Here is a 206-residue protein sequence, read N- to C-terminus: Adenine phosphoribosyltransferase (206 aa).

It belongs to the purine/pyrimidine phosphoribosyltransferase family. As to quaternary structure, homodimer.

Its subcellular location is the cytoplasm. The enzyme catalyses AMP + diphosphate = 5-phospho-alpha-D-ribose 1-diphosphate + adenine. The protein operates within purine metabolism; AMP biosynthesis via salvage pathway; AMP from adenine: step 1/1. Its function is as follows. Catalyzes a salvage reaction resulting in the formation of AMP, that is energically less costly than de novo synthesis. This is Adenine phosphoribosyltransferase from Rhodopirellula baltica (strain DSM 10527 / NCIMB 13988 / SH1).